The primary structure comprises 39 residues: uncharacterized protein (39 aa).

The chain crosses the membrane as a helical span at residues 18–38 (AIKVIALVVLITISAVVYLSV).

Its subcellular location is the membrane. This is an uncharacterized protein from Enterobacteriaceae (Bacteriophage Mu).